A 161-amino-acid chain; its full sequence is Non-specific lipid transfer protein GPI-anchored 24 (161 aa).

The first 23 residues, 1–23 (MAQTTTLILLLATLLVAATTVSG), serve as a signal peptide directing secretion. Cystine bridges form between cysteine 42-cysteine 79, cysteine 49-cysteine 63, cysteine 64-cysteine 104, and cysteine 77-cysteine 113. Asparagine 92 is a glycosylation site (N-linked (GlcNAc...) asparagine). Residue aspartate 138 is the site of GPI-anchor amidated aspartate attachment. Residues 139-161 (AASKLAGTGLVGIVVITIAAMFY) constitute a propeptide, removed in mature form.

This sequence belongs to the plant LTP family.

Its subcellular location is the cell membrane. In terms of biological role, probable lipid transfer protein. This chain is Non-specific lipid transfer protein GPI-anchored 24, found in Arabidopsis thaliana (Mouse-ear cress).